Reading from the N-terminus, the 641-residue chain is UvrABC system protein C (641 aa).

Residues 16–95 (ESPGVYRFWD…IKQYEPRFNI (80 aa)) enclose the GIY-YIG domain. The 36-residue stretch at 208 to 243 (TEYLRRLEKDMRAAAAAEDFERAARLRDDAAALRLA) folds into the UVR domain.

This sequence belongs to the UvrC family. Interacts with UvrB in an incision complex.

The protein resides in the cytoplasm. Its function is as follows. The UvrABC repair system catalyzes the recognition and processing of DNA lesions. UvrC both incises the 5' and 3' sides of the lesion. The N-terminal half is responsible for the 3' incision and the C-terminal half is responsible for the 5' incision. The chain is UvrABC system protein C from Acidothermus cellulolyticus (strain ATCC 43068 / DSM 8971 / 11B).